The following is a 1498-amino-acid chain: ATP-binding cassette sub-family C member 6 (1498 aa).

The Extracellular portion of the chain corresponds to 1 to 37; sequence MNRGRSMATPGEQCAGLRVWNQTEQEPAAYHLLSLCF. N-linked (GlcNAc...) asparagine glycosylation is present at N21. The chain crosses the membrane as a helical span at residues 38 to 58; sequence VRAASSWVPPMYLWVLGPIYL. At 59–78 the chain is on the cytoplasmic side; the sequence is LYIHRHGRCYLRMSHLFKTK. The helical transmembrane segment at 79-99 threads the bilayer; the sequence is MVLGLALILLYTFNVAVPLWR. The Extracellular portion of the chain corresponds to 100-104; that stretch reads IHQGV. Residues 105 to 125 form a helical membrane-spanning segment; that stretch reads PQAPELLIHPTVWLTTMSFAT. Residues 126–137 lie on the Cytoplasmic side of the membrane; the sequence is FLIHMERRKGVR. Residues 138–155 form a helical membrane-spanning segment; that stretch reads SSGVLFGYWLLCCILPGI. Over 156–173 the chain is Extracellular; it reads NTVQQASAGNFRQEPLHH. A helical membrane pass occupies residues 174–194; it reads LATYLCLSLVVAELVLSCLVD. Topologically, residues 195-300 are cytoplasmic; that stretch reads QPPFFSEDSQ…RSQRGPLLRA (106 aa). The helical transmembrane segment at 301-321 threads the bilayer; that stretch reads IWRVFRSTFLLGTLSLVISDA. One can recognise an ABC transmembrane type-1 1 domain in the interval 309 to 592; the sequence is FLLGTLSLVI…LPFSVHCIVQ (284 aa). The Extracellular portion of the chain corresponds to 322-347; the sequence is FRFAVPKLLSLFLEFMGDRNSSAWTG. N-linked (GlcNAc...) asparagine glycosylation is present at N341. Residues 348–368 form a helical membrane-spanning segment; sequence WLLAVLMFAAACLQTLFEQQH. The Cytoplasmic segment spans residues 369–424; the sequence is MYRAKVLQMRLRTAITGLVYRKVLVLSSGSRKSSAAGDVVNLVSVDIQRLAESIIY. The helical transmembrane segment at 425–445 threads the bilayer; it reads LNGLWLLFLWIFVCFVYLWQL. Topologically, residues 446–448 are extracellular; sequence LGP. A helical membrane pass occupies residues 449 to 469; it reads SALTAVAVFLSLLPLNFFITK. The Cytoplasmic segment spans residues 470–531; the sequence is KRGFHQEEQM…ALKTSTLLFS (62 aa). A helical membrane pass occupies residues 532–552; that stretch reads VSLVSFQVSTFLVALVVFAVH. Residues 553-574 are Extracellular-facing; sequence TLVAEDNAMDAEKAFVTLTVLS. Residues 575 to 595 traverse the membrane as a helical segment; the sequence is ILNKAQAFLPFSVHCIVQARV. The Cytoplasmic portion of the chain corresponds to 596–934; that stretch reads SFDRLAAFLC…VKTTIYLSYL (339 aa). The 225-residue stretch at 627–851 folds into the ABC transporter 1 domain; the sequence is ISVHNGTFAW…NGALVGLLDG (225 aa). 661-668 serves as a coordination point for ATP; it reads GPVGAGKS. Positions 855–910 are disordered; sequence PAGTHDAATSDDLGGFPGGGRPTCRPDRPRPTEAAPVKGRSTSEVQMEASLDDPEA. Residues 935 to 955 traverse the membrane as a helical segment; that stretch reads RAVGTPLCTYTLFLFLCQQVA. Residues 942 to 1223 form the ABC transmembrane type-1 2 domain; sequence CTYTLFLFLC…VVRSWTDLEN (282 aa). Over 956–992 the chain is Extracellular; sequence SFSQGYWLSLWADDPVVDGRQMHAALRGWVFGLLGCL. A helical membrane pass occupies residues 993-1013; it reads QAIGLFASMAAVFLGGARASG. Over 1014 to 1056 the chain is Cytoplasmic; the sequence is LLFRSLLWDVARSPIGFFERTPVGNLLNRFSKETDTVDVDIPD. A helical membrane pass occupies residues 1057–1077; that stretch reads KLRSLLTYAFGLLEVGLAVTM. A topological domain (extracellular) is located at residue A1078. Residues 1079 to 1099 traverse the membrane as a helical segment; it reads TPLAIVAILPLMVLYAGFQSL. Residues 1100 to 1170 are Cytoplasmic-facing; sequence YVATSCQLRR…VADRWLATNL (71 aa). The chain crosses the membrane as a helical span at residues 1171–1191; the sequence is ELLGNGLVFVAATCAVLSKAH. Over 1192–1193 the chain is Extracellular; sequence LS. The helical transmembrane segment at 1194 to 1214 threads the bilayer; that stretch reads AGLVGFSVSAALQVTQTLQWV. The Cytoplasmic segment spans residues 1215 to 1498; the sequence is VRSWTDLENS…YRLAHESGLA (284 aa). One can recognise an ABC transporter 2 domain in the interval 1260–1494; sequence IEFRDFGLRH…KGLFYRLAHE (235 aa). At S1281 the chain carries Phosphoserine. 1294-1301 contacts ATP; sequence GRTGAGKS.

The protein belongs to the ABC transporter superfamily. ABCC family. Conjugate transporter (TC 3.A.1.208) subfamily. Glycosylated.

The protein resides in the basolateral cell membrane. The protein localises to the basal cell membrane. The enzyme catalyses an S-substituted glutathione(in) + ATP + H2O = an S-substituted glutathione(out) + ADP + phosphate + H(+). The catalysed reaction is leukotriene C4(in) + ATP + H2O = leukotriene C4(out) + ADP + phosphate + H(+). In terms of biological role, ATP-dependent transporter of the ATP-binding cassette (ABC) family that actively extrudes physiological compounds, and xenobiotics from cells. Mediates ATP-dependent transport of glutathione conjugates such as leukotriene-c4 (LTC4) and N-ethylmaleimide S-glutathione (NEM-GS) (in vitro), and an anionic cyclopentapeptide endothelin antagonist, BQ-123. May contribute to regulate the transport of organic compounds in testes across the blood-testis-barrier. Mediates the release of nucleoside triphosphates, predominantly ATP, into the circulation, where it is rapidly converted into AMP and the mineralization inhibitor inorganic pyrophosphate (PPi) by the ecto-enzyme ectonucleotide pyrophosphatase phosphodiesterase 1 (ENPP1), therefore playing a role in PPi homeostasis. The chain is ATP-binding cassette sub-family C member 6 (Abcc6) from Mus musculus (Mouse).